A 720-amino-acid chain; its full sequence is DNA replication licensing factor mcm7-B (720 aa).

The C4-type zinc finger occupies 183–210 (CDQCGAETYQPIQSPTFMPLIMCPSREC). The region spanning 331 to 537 (FYEKLAASIA…NDLRLAQHIT (207 aa)) is the MCM domain. Residues Tyr344, Gly383, Ala385, Lys386, Ser387, Asn488, Arg513, and Arg603 each coordinate ATP. The Arginine finger signature appears at 512 to 515 (SRFD).

This sequence belongs to the MCM family. As to quaternary structure, component of the mcm2-7 complex (RLF-M). The complex forms a toroidal hexameric ring with the proposed subunit order mcm2-mcm6-mcm4-mcm7-mcm3-mcm5. The heterodimer of mmcm3/mcm5 interacts with mcm4, mmcm6, mcm7 and weakly with mcm2. The N-terminus is required for interaction with mmcm3, though this interaction may not be direct, and remains in a complex with mmcm3 throughout the cell cycle. Begins to associate with zmcm6 at the neurula stage. Component of the replisome complex. Component of the CMG helicase complex, composed of the mcm2-7 complex, the GINS complex and cdc45. In terms of processing, ubiquitinated by traip when forks converge following formation of DNA interstrand cross-links. Short ubiquitin chains on mcm7 promote recruitment of DNA glycosylase neil3. If the interstrand cross-link cannot be cleaved by neil3, the ubiquitin chains continue to grow on mcm7, promoting the unloading of the CMG helicase complex by the vcp/p97 ATPase.

It is found in the nucleus. The protein resides in the chromosome. It catalyses the reaction ATP + H2O = ADP + phosphate + H(+). Functionally, acts as a component of the mcm2-7 complex (mcm complex) which is the putative replicative helicase essential for 'once per cell cycle' DNA replication initiation and elongation in eukaryotic cells. The active ATPase sites in the mcm2-7 ring are formed through the interaction surfaces of two neighboring subunits such that a critical structure of a conserved arginine finger motif is provided in trans relative to the ATP-binding site of the Walker A box of the adjacent subunit. The six ATPase active sites, however, are likely to contribute differentially to the complex helicase activity. The existence of maternal and zygotic forms of mcm3 and mcm6 suggests that specific forms of mcm2-7 complexes may be used during different stages of development. The chain is DNA replication licensing factor mcm7-B (mcm7-b) from Xenopus laevis (African clawed frog).